Here is a 235-residue protein sequence, read N- to C-terminus: Ribonuclease HII (235 aa).

Positions 23–212 (GLVAGVDEAG…VAHVVSIARM (190 aa)) constitute an RNase H type-2 domain. Positions 29, 30, and 121 each coordinate a divalent metal cation.

It belongs to the RNase HII family. The cofactor is Mn(2+). Mg(2+) is required as a cofactor.

Its subcellular location is the cytoplasm. The catalysed reaction is Endonucleolytic cleavage to 5'-phosphomonoester.. Its function is as follows. Endonuclease that specifically degrades the RNA of RNA-DNA hybrids. The protein is Ribonuclease HII of Delftia acidovorans (strain DSM 14801 / SPH-1).